A 280-amino-acid chain; its full sequence is Formamidopyrimidine-DNA glycosylase (280 aa).

P2 acts as the Schiff-base intermediate with DNA in catalysis. E3 serves as the catalytic Proton donor. Catalysis depends on K59, which acts as the Proton donor; for beta-elimination activity. Residues H92 and R111 each coordinate DNA. The FPG-type zinc finger occupies 239-273 (NVYGQTGLPCNRCGTPIVKTKVAQRGTHYCPQCQQ). The active-site Proton donor; for delta-elimination activity is R263.

This sequence belongs to the FPG family. Monomer. Requires Zn(2+) as cofactor.

It carries out the reaction Hydrolysis of DNA containing ring-opened 7-methylguanine residues, releasing 2,6-diamino-4-hydroxy-5-(N-methyl)formamidopyrimidine.. The catalysed reaction is 2'-deoxyribonucleotide-(2'-deoxyribose 5'-phosphate)-2'-deoxyribonucleotide-DNA = a 3'-end 2'-deoxyribonucleotide-(2,3-dehydro-2,3-deoxyribose 5'-phosphate)-DNA + a 5'-end 5'-phospho-2'-deoxyribonucleoside-DNA + H(+). Involved in base excision repair of DNA damaged by oxidation or by mutagenic agents. Acts as a DNA glycosylase that recognizes and removes damaged bases. Has a preference for oxidized purines, such as 7,8-dihydro-8-oxoguanine (8-oxoG). Has AP (apurinic/apyrimidinic) lyase activity and introduces nicks in the DNA strand. Cleaves the DNA backbone by beta-delta elimination to generate a single-strand break at the site of the removed base with both 3'- and 5'-phosphates. This is Formamidopyrimidine-DNA glycosylase from Enterococcus faecalis (strain ATCC 700802 / V583).